Here is a 301-residue protein sequence, read N- to C-terminus: Ribonuclease H2 subunit A (301 aa).

Position 1 is an N-acetylmethionine (Met-1). Positions 28–251 constitute an RNase H type-2 domain; that stretch reads PCVLGVDEAG…AQAILEKEAE (224 aa). A divalent metal cation is bound by residues Asp-34, Glu-35, and Asp-142. At Thr-217 the chain carries Phosphothreonine. Phosphoserine is present on Ser-258.

The protein belongs to the RNase HII family. Eukaryotic subfamily. In terms of assembly, the RNase H2 complex is a heterotrimer composed of the catalytic subunit RNASEH2A and the non-catalytic subunits RNASEH2B and RNASEH2C. The cofactor is Mn(2+). It depends on Mg(2+) as a cofactor.

It is found in the nucleus. It catalyses the reaction Endonucleolytic cleavage to 5'-phosphomonoester.. Its function is as follows. Catalytic subunit of RNase HII, an endonuclease that specifically degrades the RNA of RNA:DNA hybrids. Participates in DNA replication, possibly by mediating the removal of lagging-strand Okazaki fragment RNA primers during DNA replication. Mediates the excision of single ribonucleotides from DNA:RNA duplexes. The sequence is that of Ribonuclease H2 subunit A (Rnaseh2a) from Rattus norvegicus (Rat).